The sequence spans 250 residues: Ubiquitin-conjugating enzyme E2 6 (250 aa).

Residues 1–232 (MATKQAHKRL…DGKEPNDSSS (232 aa)) lie on the Cytoplasmic side of the membrane. The 163-residue stretch at 5–167 (QAHKRLTKEY…VQENVETLEK (163 aa)) folds into the UBC core domain. Cys87 functions as the Glycyl thioester intermediate in the catalytic mechanism. Ser139 carries the phosphoserine modification. Thr178 is modified (phosphothreonine). The tract at residues 209–229 (AEQALRQSENNSKKDGKEPND) is disordered. Over residues 219 to 228 (NSKKDGKEPN) the composition is skewed to basic and acidic residues. A helical membrane pass occupies residues 233-249 (MVYIGIAIFLFLVGLFM).

The protein belongs to the ubiquitin-conjugating enzyme family.

The protein resides in the endoplasmic reticulum membrane. The catalysed reaction is S-ubiquitinyl-[E1 ubiquitin-activating enzyme]-L-cysteine + [E2 ubiquitin-conjugating enzyme]-L-cysteine = [E1 ubiquitin-activating enzyme]-L-cysteine + S-ubiquitinyl-[E2 ubiquitin-conjugating enzyme]-L-cysteine.. Its pathway is protein modification; protein ubiquitination. Its function is as follows. Catalyzes the covalent attachment of ubiquitin to other proteins. Functions in degradation of misfolded or regulated proteins localized in the endoplasmic reticulum (ER) lumen or membrane via the ubiquitin-proteasome system. Cognate E2 conjugating enzyme for the DOA10 ubiquitin ligase complex, which is part of the ERAD-C pathway responsible for the rapid degradation of membrane proteins with misfolded cytoplasmic domains. This is Ubiquitin-conjugating enzyme E2 6 (UBC6) from Saccharomyces cerevisiae (strain ATCC 204508 / S288c) (Baker's yeast).